The primary structure comprises 88 residues: MPKRSPPDTSPVARFEQSLQELEQLVQNMETGALSLEQSLGAYERGIALYRECHQALEQAQLRVRILSDPMHPDDGEPFDPSLVSTSQ.

The disordered stretch occupies residues 69–88; sequence DPMHPDDGEPFDPSLVSTSQ.

The protein belongs to the XseB family. Heterooligomer composed of large and small subunits.

Its subcellular location is the cytoplasm. It carries out the reaction Exonucleolytic cleavage in either 5'- to 3'- or 3'- to 5'-direction to yield nucleoside 5'-phosphates.. Its function is as follows. Bidirectionally degrades single-stranded DNA into large acid-insoluble oligonucleotides, which are then degraded further into small acid-soluble oligonucleotides. The sequence is that of Exodeoxyribonuclease 7 small subunit from Xylella fastidiosa (strain M23).